Here is a 568-residue protein sequence, read N- to C-terminus: Oxygen-dependent choline dehydrogenase (568 aa).

8 to 37 contacts FAD; sequence DYVIIGGGSAGSVLGNRLTEDKDKEVLVLE. The active-site Proton acceptor is H473.

This sequence belongs to the GMC oxidoreductase family. The cofactor is FAD.

It catalyses the reaction choline + A = betaine aldehyde + AH2. The enzyme catalyses betaine aldehyde + NAD(+) + H2O = glycine betaine + NADH + 2 H(+). Its pathway is amine and polyamine biosynthesis; betaine biosynthesis via choline pathway; betaine aldehyde from choline (cytochrome c reductase route): step 1/1. In terms of biological role, involved in the biosynthesis of the osmoprotectant glycine betaine. Catalyzes the oxidation of choline to betaine aldehyde and betaine aldehyde to glycine betaine at the same rate. In Staphylococcus haemolyticus (strain JCSC1435), this protein is Oxygen-dependent choline dehydrogenase.